We begin with the raw amino-acid sequence, 576 residues long: Low-affinity glucose transporter HXT4 (576 aa).

The segment at 1–56 (MSEEAAYQEDTAVQNTPADALSPVESDSNSALSTPSNKAERDDMKDFDENHEESNN) is disordered. The Cytoplasmic portion of the chain corresponds to 1–66 (MSEEAAYQED…YVEIPKKPAS (66 aa)). A compositionally biased stretch (polar residues) spans 25 to 37 (ESDSNSALSTPSN). Over residues 38-54 (KAERDDMKDFDENHEES) the composition is skewed to basic and acidic residues. A Glycyl lysine isopeptide (Lys-Gly) (interchain with G-Cter in ubiquitin) cross-link involves residue Lys-45. A helical membrane pass occupies residues 67–87 (AYVTVSICCLMVAFGGFVFGW). The Extracellular segment spans residues 88–122 (DTGTISGFVAQTDFIRRFGMKHHDGTYYLSKVRTG). A helical membrane pass occupies residues 123-143 (LMVSIINIGCAIGGIILAKLG). Residues 144-149 (DMYGRK) lie on the Cytoplasmic side of the membrane. Residues 150 to 170 (MGLIVVVVIYIIGIIIQIASI) form a helical membrane-spanning segment. Residues 171–180 (NKWYQYFIGR) are Extracellular-facing. A helical membrane pass occupies residues 181–201 (IISGLGVGGIAVLSPMLISEV). The Cytoplasmic segment spans residues 202–207 (SPKHIR). A helical transmembrane segment spans residues 208–228 (GTLVSCYQLMITLGIFLGYCT). Topologically, residues 229 to 242 (NYGTKTYTNSVQWR) are extracellular. The chain crosses the membrane as a helical span at residues 243–263 (VPLGLGFAWALFMIGGMTFVP). At 264 to 346 (ESPRYLVEVG…IQSLQQLTGD (83 aa)) the chain is on the cytoplasmic side. Residues 347-363 (NYFFYYGTTVFTAVGLS) traverse the membrane as a helical segment. Over 364-369 (DSFETS) the chain is Extracellular. A helical membrane pass occupies residues 370-387 (IVLGIVNFASTFVGIFLV). The Cytoplasmic portion of the chain corresponds to 388 to 394 (ERYGRRR). The helical transmembrane segment at 395 to 415 (CLLWGAASMTACMVVFASVGV) threads the bilayer. The Extracellular segment spans residues 416-437 (TRLWPNGKKNGSSKGAGNCMIV). N-linked (GlcNAc...) asparagine glycosylation is present at Asn-425. Residues 438–458 (FTCFYLFCFATTWAPIPFVVN) traverse the membrane as a helical segment. At 459–475 (SETFPLRVKSKCMAIAQ) the chain is on the cytoplasmic side. A helical membrane pass occupies residues 476-496 (ACNWIWGFLIGFFTPFISNAI). Asp-497 is a topological domain (extracellular). Residues 498-518 (FYYGYVFMGCLVFSYFYVFFF) traverse the membrane as a helical segment. Residues 519 to 576 (VPETKGLTLEEVNTLWEEGVLPWKSPSWVPPNKRGTDYNADDLMHDDQPFYKKMFGKK) are Cytoplasmic-facing.

It belongs to the major facilitator superfamily. Sugar transporter (TC 2.A.1.1) family.

The protein resides in the cell membrane. Its activity is regulated as follows. Xylose uptake is strongly inhibited by glucose. In terms of biological role, low-affinity glucose transporter. Can also transport xylose. This Saccharomyces cerevisiae (strain JAY291) (Baker's yeast) protein is Low-affinity glucose transporter HXT4 (HXT4).